Consider the following 621-residue polypeptide: Elongation factor 4 (621 aa).

One can recognise a tr-type G domain in the interval 21–203 (DLIRNICIIA…AIVKRVPPPK (183 aa)). Residues 33–38 (DHGKTT) and 150–153 (NKID) each bind GTP.

The protein belongs to the TRAFAC class translation factor GTPase superfamily. Classic translation factor GTPase family. LepA subfamily.

It is found in the cell inner membrane. The catalysed reaction is GTP + H2O = GDP + phosphate + H(+). Its function is as follows. Required for accurate and efficient protein synthesis under certain stress conditions. May act as a fidelity factor of the translation reaction, by catalyzing a one-codon backward translocation of tRNAs on improperly translocated ribosomes. Back-translocation proceeds from a post-translocation (POST) complex to a pre-translocation (PRE) complex, thus giving elongation factor G a second chance to translocate the tRNAs correctly. Binds to ribosomes in a GTP-dependent manner. The protein is Elongation factor 4 of Thermotoga maritima (strain ATCC 43589 / DSM 3109 / JCM 10099 / NBRC 100826 / MSB8).